We begin with the raw amino-acid sequence, 413 residues long: Arginine biosynthesis bifunctional protein ArgJ (413 aa).

Residues threonine 160, lysine 186, threonine 197, glutamate 284, asparagine 408, and serine 413 each coordinate substrate. Residue threonine 197 is the Nucleophile of the active site.

Belongs to the ArgJ family. Heterotetramer of two alpha and two beta chains.

It is found in the cytoplasm. It carries out the reaction N(2)-acetyl-L-ornithine + L-glutamate = N-acetyl-L-glutamate + L-ornithine. The catalysed reaction is L-glutamate + acetyl-CoA = N-acetyl-L-glutamate + CoA + H(+). It functions in the pathway amino-acid biosynthesis; L-arginine biosynthesis; L-ornithine and N-acetyl-L-glutamate from L-glutamate and N(2)-acetyl-L-ornithine (cyclic): step 1/1. The protein operates within amino-acid biosynthesis; L-arginine biosynthesis; N(2)-acetyl-L-ornithine from L-glutamate: step 1/4. Catalyzes two activities which are involved in the cyclic version of arginine biosynthesis: the synthesis of N-acetylglutamate from glutamate and acetyl-CoA as the acetyl donor, and of ornithine by transacetylation between N(2)-acetylornithine and glutamate. The sequence is that of Arginine biosynthesis bifunctional protein ArgJ from Burkholderia pseudomallei (strain K96243).